The following is a 306-amino-acid chain: tRNA dimethylallyltransferase (306 aa).

Gly-12–Thr-19 provides a ligand contact to ATP. Thr-14–Thr-19 contributes to the substrate binding site. Interaction with substrate tRNA stretches follow at residues Asp-37–Leu-40, Gln-161–Arg-165, and Arg-242–Arg-247.

This sequence belongs to the IPP transferase family. Monomer. It depends on Mg(2+) as a cofactor.

The catalysed reaction is adenosine(37) in tRNA + dimethylallyl diphosphate = N(6)-dimethylallyladenosine(37) in tRNA + diphosphate. Catalyzes the transfer of a dimethylallyl group onto the adenine at position 37 in tRNAs that read codons beginning with uridine, leading to the formation of N6-(dimethylallyl)adenosine (i(6)A). This is tRNA dimethylallyltransferase from Pseudoalteromonas translucida (strain TAC 125).